We begin with the raw amino-acid sequence, 262 residues long: Flap endonuclease Xni (262 aa).

Asp105 lines the Mg(2+) pocket. The region spanning 162 to 254 is the 5'-3' exonuclease domain; it reads ERSQFLDLMA…LKDFRVIDSL (93 aa). 5 residues coordinate K(+): Leu172, Ala173, Pro181, Ile183, and Ile186. The tract at residues 185–190 is interaction with DNA; the sequence is GIGPKS.

This sequence belongs to the Xni family. Mg(2+) is required as a cofactor. K(+) serves as cofactor.

In terms of biological role, has flap endonuclease activity. During DNA replication, flap endonucleases cleave the 5'-overhanging flap structure that is generated by displacement synthesis when DNA polymerase encounters the 5'-end of a downstream Okazaki fragment. In Shewanella baltica (strain OS195), this protein is Flap endonuclease Xni.